Reading from the N-terminus, the 374-residue chain is Potassium channel subfamily K member 9 (374 aa).

Residues 1–8 (MKRQNVRT) lie on the Cytoplasmic side of the membrane. A helical transmembrane segment spans residues 9–29 (LSLIICTFTYLLVGAAVFDAL). The Extracellular portion of the chain corresponds to 30 to 88 (ESDYEMREEEKLKAEEIRLKGKYNISSEDYRQLELVIMQSEPHRAGVQWKFAGSFYFAI). Asn53 carries N-linked (GlcNAc...) asparagine glycosylation. An intramembrane region (pore-forming) is located at residues 89-101 (TVITTIGYGHAAP). Over 102–107 (GTDAGK) the chain is Extracellular. A helical transmembrane segment spans residues 108–128 (AFCMFYAVLGIPLTLVMFQSL). Residues 129–158 (GERMNTFVKYLLKRIKKCCGMHSTDVSMEN) lie on the Cytoplasmic side of the membrane. The helical transmembrane segment at 159 to 179 (MVTVGFFSCMGTLCIGAAAFS) threads the bilayer. Topologically, residues 180-194 (HYEEWSFFQAYYYCF) are extracellular. An intramembrane region (pore-forming) is located at residues 195–207 (ITLTTIGFGDYVA). Over 208-218 (LQKNRALQKKP) the chain is Extracellular. A helical transmembrane segment spans residues 219 to 239 (LYVAFSFMYILVGLTVIGAFL). Over 240-374 (NLVVLRFLTM…HRLMKRRKSI (135 aa)) the chain is Cytoplasmic.

It belongs to the two pore domain potassium channel (TC 1.A.1.8) family. As to quaternary structure, homodimer. May form heterodimers with other family members.

It is found in the cell membrane. Functionally, pH-dependent, voltage-insensitive, background potassium channel protein. This chain is Potassium channel subfamily K member 9 (kcnk9), found in Xenopus laevis (African clawed frog).